Here is a 424-residue protein sequence, read N- to C-terminus: Deoxyguanosinetriphosphate triphosphohydrolase-like protein (424 aa).

The segment at 1-27 (MYPYSDADAFRRQPERAKSSQLRTSAV) is disordered. Over residues 8-18 (DAFRRQPERAK) the composition is skewed to basic and acidic residues. Residues 67–217 (RLTHSLEVAQ…MDFSDDIAYS (151 aa)) enclose the HD domain.

It belongs to the dGTPase family. Type 2 subfamily.

The chain is Deoxyguanosinetriphosphate triphosphohydrolase-like protein (dgt) from Corynebacterium glutamicum (strain ATCC 13032 / DSM 20300 / JCM 1318 / BCRC 11384 / CCUG 27702 / LMG 3730 / NBRC 12168 / NCIMB 10025 / NRRL B-2784 / 534).